The chain runs to 69 residues: DNA gyrase inhibitor YacG (69 aa).

Residues Cys13, Cys16, Cys32, and Cys36 each contribute to the Zn(2+) site.

This sequence belongs to the DNA gyrase inhibitor YacG family. As to quaternary structure, interacts with GyrB. The cofactor is Zn(2+).

Inhibits all the catalytic activities of DNA gyrase by preventing its interaction with DNA. Acts by binding directly to the C-terminal domain of GyrB, which probably disrupts DNA binding by the gyrase. This chain is DNA gyrase inhibitor YacG, found in Neisseria meningitidis serogroup A / serotype 4A (strain DSM 15465 / Z2491).